The primary structure comprises 267 residues: Palmitoyltransferase ZDHHC12 (267 aa).

Residues 1–9 (MAPWALLSP) are Cytoplasmic-facing. A helical membrane pass occupies residues 10 to 30 (GVLVRTGHTVLTWGITLVLFL). The Lumenal portion of the chain corresponds to 31-43 (HDTELRQWEEQGE). The helical transmembrane segment at 44 to 64 (LLLPLTFLLLVLGSLLLYLAV) threads the bilayer. Topologically, residues 65 to 140 (SLMDPGYVNV…ENCVGERNHP (76 aa)) are cytoplasmic. The region spanning 97–147 (RRCRYCLVLQPLRARHCRECRRCVRRYDHHCPWMENCVGERNHPLFVVYLA) is the DHHC domain. Cysteine 127 (S-palmitoyl cysteine intermediate) is an active-site residue. A helical membrane pass occupies residues 141–161 (LFVVYLALQLVVLLWGLYLAW). Residues 162 to 178 (SGLRFFQPWGQWLRSSG) lie on the Lumenal side of the membrane. The chain crosses the membrane as a helical span at residues 179–199 (LLFATFLLLSLFSLVASLLLV). Over 200 to 267 (SHLYLVASNT…EEEEGSSPAV (68 aa)) the chain is Cytoplasmic.

It belongs to the DHHC palmitoyltransferase family. As to expression, widely expressed.

The protein resides in the golgi apparatus membrane. It localises to the endoplasmic reticulum membrane. It carries out the reaction L-cysteinyl-[protein] + hexadecanoyl-CoA = S-hexadecanoyl-L-cysteinyl-[protein] + CoA. Palmitoyltransferase that catalyzes the addition of palmitate onto various protein substrates. Has a palmitoyltransferase activity toward gephyrin/GPHN, regulating its clustering at synapses and its function in gamma-aminobutyric acid receptor clustering. Thereby, indirectly regulates GABAergic synaptic transmission. Negatively regulates NLRP3-driven inflammation. Catalyzes NLRP3 palmitoylation, leading to its degradation via the chaperone-mediated autophagy (CMA) process. The protein is Palmitoyltransferase ZDHHC12 of Homo sapiens (Human).